We begin with the raw amino-acid sequence, 104 residues long: Large ribosomal subunit protein uL24 (104 aa).

This sequence belongs to the universal ribosomal protein uL24 family. In terms of assembly, part of the 50S ribosomal subunit.

Functionally, one of two assembly initiator proteins, it binds directly to the 5'-end of the 23S rRNA, where it nucleates assembly of the 50S subunit. One of the proteins that surrounds the polypeptide exit tunnel on the outside of the subunit. This Buchnera aphidicola subsp. Schizaphis graminum (strain Sg) protein is Large ribosomal subunit protein uL24.